Reading from the N-terminus, the 142-residue chain is Hemoglobin subunit alpha-1 (142 aa).

Serine 1 bears the N-acetylserine mark. Residues 1–142 form the Globin domain; that stretch reads SLSDKDKAAV…VALALAERYR (142 aa). Histidine 59 is an O2 binding site. Histidine 88 is a heme b binding site.

It belongs to the globin family. In terms of assembly, hb1 is a heterotetramer of two alpha-1 chains and two beta chains. HbC is a heterotetramer of two alpha-1 chains and two beta-C chains. Red blood cells.

Functionally, involved in oxygen transport from gills to the various peripheral tissues. The chain is Hemoglobin subunit alpha-1 (hba1) from Trematomus newnesi (Dusky notothen).